A 257-amino-acid polypeptide reads, in one-letter code: Discoidin-2 (257 aa).

The beta-sandwich stretch occupies residues 1–155; the sequence is MSVPAGSVSC…SLRWELYALP (155 aa). Residues 10 to 154 enclose the F5/8 type C domain; it reads CLANALLNLR…ISLRWELYAL (145 aa). Ca(2+) contacts are provided by Asn-39, Ser-40, and Asp-47. A Cell attachment site motif is present at residues 81–83; the sequence is RGD. His-84 is modified (phosphohistidine). Residues 156 to 162 form a linker region; that stretch reads VKSYSNP. The segment at 163–257 is lectin-like; it reads SVQVGEVSIG…FDYVAVEFNN (95 aa). Residues Asp-209, Arg-218, and Trp-238 each contribute to the a carbohydrate site.

Homotrimer. Post-translationally, the N-terminus is blocked. As to expression, maturing spore cells.

Its function is as follows. Galactose-binding lectin. May be necessary for the primary process of spore formation and may be involved in spore coat formation. The sequence is that of Discoidin-2 (dscE) from Dictyostelium discoideum (Social amoeba).